Reading from the N-terminus, the 304-residue chain is Small glutamine-rich tetratricopeptide repeat-containing protein beta (304 aa).

4 TPR repeats span residues 15–49, 85–118, 120–152, and 153–186; these read LREQSQMDAYTSDEQESLEVAIQCLETVFKISPED, ADQLKDEGNNHMKEENYAAAVDCYTQAIELDPNN, VYYCNRAAAQSKLSHYTDAIKDCEKAIAIDSKY, and SKAYGRMGLALTAMNKFEEAVTSYQKALDLDPEN. Lys-131 is modified (N6-acetyllysine). Phosphoserine is present on residues Ser-293, Ser-295, and Ser-297.

It belongs to the SGT family. As to quaternary structure, homooligomerize.

Its function is as follows. Co-chaperone that binds directly to HSC70 and HSP70 and regulates their ATPase activity. This chain is Small glutamine-rich tetratricopeptide repeat-containing protein beta (Sgtb), found in Mus musculus (Mouse).